We begin with the raw amino-acid sequence, 417 residues long: Lysosome-associated membrane glycoprotein 1 (417 aa).

The first 28 residues, 1–28, serve as a signal peptide directing secretion; it reads MAAPGSARRPLLLLLLLLLLGLMHCASA. Positions 29–194 are first lumenal domain; sequence AMFMVKNGNG…SRGETRCEQD (166 aa). Residues 29–382 lie on the Lumenal side of the membrane; sequence AMFMVKNGNG…EECLLDENSM (354 aa). N-linked (GlcNAc...) asparagine glycosylation is found at N37 and N45. A disulfide bond links C41 and C80. A glycan (N-linked (GlcNAc...) (polylactosaminoglycan) asparagine) is linked at N62. N-linked (GlcNAc...) asparagine glycans are attached at residues N76, N84, N103, and N107. 2 N-linked (GlcNAc...) (polylactosaminoglycan) asparagine glycosylation sites follow: N121 and N130. A disulfide bridge connects residues C155 and C191. N-linked (GlcNAc...) asparagine glycosylation is found at N165 and N181. The interval 184–221 is disordered; sequence FSRGETRCEQDRPSPTTAPPAPPSPSPSPVPKSPSVDK. Positions 195–227 are hinge; it reads RPSPTTAPPAPPSPSPSPVPKSPSVDKYNVSGT. S197 carries an O-linked (GalNAc...) serine; partial glycan. T199 and T200 each carry an O-linked (GalNAc...) threonine glycan. Positions 199–215 are enriched in pro residues; sequence TTAPPAPPSPSPSPVPK. O-linked (GalNAc...) serine glycans are attached at residues S207, S209, and S211. N-linked (GlcNAc...) (polylactosaminoglycan) asparagine glycans are attached at residues N223 and N228. Positions 228-382 are second lumenal domain; that stretch reads NGTCLLASMG…EECLLDENSM (155 aa). Cysteines 231 and 269 form a disulfide. 5 N-linked (GlcNAc...) asparagine glycosylation sites follow: N241, N249, N261, N293, and N322. Cysteines 338 and 375 form a disulfide. A helical transmembrane segment spans residues 383 to 410; sequence LIPIAVGGALAGLVLIVLIAYLVGRKRS. Topologically, residues 411–417 are cytoplasmic; that stretch reads HAGYQTI.

It belongs to the LAMP family. As to quaternary structure, interacts with ABCB9; this interaction strongly stabilizes ABCB9 and protects ABCB9 against lysosomal degradation. Interacts with FURIN. Interacts with TMEM175; inhibiting the proton channel activity of TMEM175. In terms of assembly, (Microbial infection) Interacts with Lassa virus protein glycoprotein. (Microbial infection) Interacts with mumps virus protein F; this interaction promotes protein F cleavage by FURIN. In terms of processing, O- and N-glycosylated; some of the 18 N-linked glycans are polylactosaminoglycans. Post-translationally, (Microbial infection) The glycosylation of Asn-76 is essential for Lassa virus entry into cells.

It localises to the lysosome membrane. It is found in the endosome membrane. The protein resides in the late endosome membrane. Its subcellular location is the cell membrane. The protein localises to the cytolytic granule membrane. Its function is as follows. Lysosomal membrane glycoprotein which plays an important role in lysosome biogenesis, lysosomal pH regulation, autophagy and cholesterol homeostasis. Acts as an important regulator of lysosomal lumen pH regulation by acting as a direct inhibitor of the proton channel TMEM175, facilitating lysosomal acidification for optimal hydrolase activity. Also plays an important role in NK-cells cytotoxicity. Mechanistically, participates in cytotoxic granule movement to the cell surface and perforin trafficking to the lytic granule. In addition, protects NK-cells from degranulation-associated damage induced by their own cytotoxic granule content. Presents carbohydrate ligands to selectins. (Microbial infection) Acts as a receptor for Lassa virus glycoprotein. Also promotes fusion of the virus with host membrane in less acidic endosomes. In terms of biological role, (Microbial infection) Supports the FURIN-mediated cleavage of mumps virus fusion protein F by interacting with both FURIN and the unprocessed form but not the processed form of the viral protein F. The sequence is that of Lysosome-associated membrane glycoprotein 1 from Homo sapiens (Human).